The chain runs to 151 residues: Deoxyuridine 5'-triphosphate nucleotidohydrolase (151 aa).

Substrate-binding positions include 70-72, Asn-83, 87-89, and Met-97; these read RSG and LID.

It belongs to the dUTPase family. Requires Mg(2+) as cofactor.

The catalysed reaction is dUTP + H2O = dUMP + diphosphate + H(+). It participates in pyrimidine metabolism; dUMP biosynthesis; dUMP from dCTP (dUTP route): step 2/2. This enzyme is involved in nucleotide metabolism: it produces dUMP, the immediate precursor of thymidine nucleotides and it decreases the intracellular concentration of dUTP so that uracil cannot be incorporated into DNA. The polypeptide is Deoxyuridine 5'-triphosphate nucleotidohydrolase (Hamiltonella defensa subsp. Acyrthosiphon pisum (strain 5AT)).